The following is a 249-amino-acid chain: Type III pantothenate kinase (249 aa).

6 to 13 (DCGNSFIK) serves as a coordination point for ATP. Residues Tyr-93 and 100–103 (GMDR) each bind substrate. The active-site Proton acceptor is Asp-102. Asp-122 provides a ligand contact to K(+). Thr-125 is a binding site for ATP. Thr-181 contributes to the substrate binding site.

This sequence belongs to the type III pantothenate kinase family. As to quaternary structure, homodimer. NH4(+) serves as cofactor. K(+) is required as a cofactor.

The protein resides in the cytoplasm. The enzyme catalyses (R)-pantothenate + ATP = (R)-4'-phosphopantothenate + ADP + H(+). It participates in cofactor biosynthesis; coenzyme A biosynthesis; CoA from (R)-pantothenate: step 1/5. Functionally, catalyzes the phosphorylation of pantothenate (Pan), the first step in CoA biosynthesis. The chain is Type III pantothenate kinase from Pseudomonas putida (strain ATCC 47054 / DSM 6125 / CFBP 8728 / NCIMB 11950 / KT2440).